Reading from the N-terminus, the 241-residue chain is Phosphatidylcholine synthase (241 aa).

Topologically, residues 1 to 15 (MKFFNYRRVPYAEIR) are cytoplasmic. A helical transmembrane segment spans residues 16-36 (AFSVHILTASGSFLAFLGVVA). Topologically, residues 37 to 41 (AAEHR) are periplasmic. A helical membrane pass occupies residues 42–62 (FVDMFWWLGLALLVDGIDGPI). Residues 63–76 (ARKVQVKEVLPNWS) are Cytoplasmic-facing. A helical transmembrane segment spans residues 77 to 97 (GDTLDNVIDYVTYVLLPAFAL). Residues 98-100 (YQS) are Periplasmic-facing. The helical transmembrane segment at 101-121 (GMIGEPWSFVAAGAIVVSSAI) threads the bilayer. The Cytoplasmic portion of the chain corresponds to 122-133 (YYADMGMKTDEY). The helical transmembrane segment at 134–154 (FFSGFPVVWNMVVFTLFVIQA) threads the bilayer. Over 155 to 156 (SE) the chain is Periplasmic. Residues 157-177 (VTASIVVFLSVILTFLPINFL) form a helical membrane-spanning segment. Over 178–187 (HPVRVKRLRP) the chain is Cytoplasmic. Residues 188-208 (LNLGIFLVWSVLGMYALLLHF) form a helical membrane-spanning segment. Residues 209–211 (ETP) are Periplasmic-facing. The helical transmembrane segment at 212 to 232 (PWVVVGVVATGLYLYVIGFIL) threads the bilayer. Residues 233–241 (QIFPKLGRA) are Cytoplasmic-facing.

The protein belongs to the CDP-alcohol phosphatidyltransferase class-I family. It depends on Mn(2+) as a cofactor.

Its subcellular location is the cell inner membrane. It catalyses the reaction a CDP-1,2-diacyl-sn-glycerol + choline = a 1,2-diacyl-sn-glycero-3-phosphocholine + CMP + H(+). With respect to regulation, activated by CDP-diacylglycerol especially in the presence of Triton X-100 (0.1% w/v) at concentrations where micelles are formed. Maximal activation by Triton X-100 at 0.2% w/v, but higher concentrations become inhibitory. Inhibited by EDTA and high concentrations of choline. In terms of biological role, condenses choline with CDP-diglyceride to produce phosphatidylcholine and CMP. The protein is Phosphatidylcholine synthase (pcs) of Rhizobium meliloti (strain 1021) (Ensifer meliloti).